Reading from the N-terminus, the 528-residue chain is MTSKDIIENVEKRRTFAIISHPDAGKTTITEKVLLFGNALQKAGTVKGKKSGQHAKSDWMEMEKDRGISITTSVMQFPYKDRLVNLLDTPGHEDFSEDTYRTLTAVDSCLMVIDAAKGVEQRTIKLMEVTRLRDTPIITFMNKCDRETRDPVDLMDEVEAILNIACAPITWPIGMGKEFKGIYDLLRDEVILYSSGQGHTIQEVRIIKGLDNPELESVLPNHIHDLREELELVVGASHQFDHELFLKGQLTPVYFGTALGNFGVDHVLDGLVEWAPKPLSRAAKQRVVEPLEDVFSGFIFKIQANMDPRHRDRIAFMRVCAGKYEKGMKMHHVRTGKMVSISDAVTFMAGDRTATEEAYPGDIIGLHNHGTIQIGDTFTSGETLKFAGIPNFAPEMFRRIRLLDPLKQKQLLKGLMQLSEEGAVQVFRPLRSNDLIVGAVGVLQFEVVVQRLKSEYKVDAIYEAISVATALWVESDNPLKMAEFEKKAYDNLALDGSNNLAYIAPTMVNLNLAMERYPDIRFRKTREH.

The tr-type G domain occupies 11 to 279 (EKRRTFAIIS…GLVEWAPKPL (269 aa)). GTP-binding positions include 20 to 27 (SHPDAGKT), 88 to 92 (DTPGH), and 142 to 145 (NKCD).

Belongs to the TRAFAC class translation factor GTPase superfamily. Classic translation factor GTPase family. PrfC subfamily.

Its subcellular location is the cytoplasm. Functionally, increases the formation of ribosomal termination complexes and stimulates activities of RF-1 and RF-2. It binds guanine nucleotides and has strong preference for UGA stop codons. It may interact directly with the ribosome. The stimulation of RF-1 and RF-2 is significantly reduced by GTP and GDP, but not by GMP. This chain is Peptide chain release factor 3, found in Psychromonas ingrahamii (strain DSM 17664 / CCUG 51855 / 37).